The following is a 560-amino-acid chain: Putative transport protein VSAL_I2029 (560 aa).

5 helical membrane passes run 14-34, 37-57, 66-86, 94-114, and 161-181; these read ILLL…KIGS, LGSS…GYTF, FMLF…GIFL, LLVL…GYYF, and NLSV…ILLA. RCK C-terminal domains follow at residues 203–292 and 293–376; these read RGIG…FRNG and KEVF…KIGF. The next 5 membrane-spanning stretches (helical) occupy residues 386–406, 409–429, 451–471, 478–498, and 539–559; these read LLAF…TMSF, VTFG…LGFL, GLLV…IEYF, VLAA…LVGA, and AGTY…MILL.

The protein belongs to the AAE transporter (TC 2.A.81) family. YbjL subfamily.

It localises to the cell membrane. The chain is Putative transport protein VSAL_I2029 from Aliivibrio salmonicida (strain LFI1238) (Vibrio salmonicida (strain LFI1238)).